Here is a 41-residue protein sequence, read N- to C-terminus: MTARKSYTYPIFTVRWLAVHALAVPTVFFLGAITAMQFIQR.

Residues 16 to 32 (WLAVHALAVPTVFFLGA) traverse the membrane as a helical segment. Histidine 20 provides a ligand contact to heme.

The protein belongs to the PsbE/PsbF family. In terms of assembly, heterodimer of an alpha subunit and a beta subunit. PSII is composed of 1 copy each of membrane proteins PsbA, PsbB, PsbC, PsbD, PsbE, PsbF, PsbH, PsbI, PsbJ, PsbK, PsbL, PsbM, PsbT, PsbX, PsbY, PsbZ, Psb30/Ycf12, at least 3 peripheral proteins of the oxygen-evolving complex and a large number of cofactors. It forms dimeric complexes. Heme b is required as a cofactor.

Its subcellular location is the plastid. The protein resides in the chloroplast thylakoid membrane. Functionally, this b-type cytochrome is tightly associated with the reaction center of photosystem II (PSII). PSII is a light-driven water:plastoquinone oxidoreductase that uses light energy to abstract electrons from H(2)O, generating O(2) and a proton gradient subsequently used for ATP formation. It consists of a core antenna complex that captures photons, and an electron transfer chain that converts photonic excitation into a charge separation. The protein is Cytochrome b559 subunit beta of Chlorella vulgaris (Green alga).